A 453-amino-acid polypeptide reads, in one-letter code: Ribosomal protein uS12 methylthiotransferase RimO (453 aa).

The 111-residue stretch at 6–116 (PKVGFVSLGC…VMEAVHEALP (111 aa)) folds into the MTTase N-terminal domain. 6 residues coordinate [4Fe-4S] cluster: Cys15, Cys51, Cys80, Cys147, Cys151, and Cys154. Residues 133–370 (LTPRHYAYLK…MEKQAQISAA (238 aa)) form the Radical SAM core domain. One can recognise a TRAM domain in the interval 373–441 (EAKIGTVQQC…DHDLYGDALP (69 aa)).

The protein belongs to the methylthiotransferase family. RimO subfamily. It depends on [4Fe-4S] cluster as a cofactor.

It is found in the cytoplasm. It carries out the reaction L-aspartate(89)-[ribosomal protein uS12]-hydrogen + (sulfur carrier)-SH + AH2 + 2 S-adenosyl-L-methionine = 3-methylsulfanyl-L-aspartate(89)-[ribosomal protein uS12]-hydrogen + (sulfur carrier)-H + 5'-deoxyadenosine + L-methionine + A + S-adenosyl-L-homocysteine + 2 H(+). Its function is as follows. Catalyzes the methylthiolation of an aspartic acid residue of ribosomal protein uS12. The sequence is that of Ribosomal protein uS12 methylthiotransferase RimO from Stenotrophomonas maltophilia (strain R551-3).